We begin with the raw amino-acid sequence, 273 residues long: Urease accessory protein UreD (273 aa).

The tract at residues 1–29 (MLMRTATPLDQPRAIGSARVSSKRVNGGS) is disordered.

The protein belongs to the UreD family. UreD, UreF and UreG form a complex that acts as a GTP-hydrolysis-dependent molecular chaperone, activating the urease apoprotein by helping to assemble the nickel containing metallocenter of UreC. The UreE protein probably delivers the nickel.

It is found in the cytoplasm. Required for maturation of urease via the functional incorporation of the urease nickel metallocenter. The protein is Urease accessory protein UreD of Roseobacter denitrificans (strain ATCC 33942 / OCh 114) (Erythrobacter sp. (strain OCh 114)).